Reading from the N-terminus, the 497-residue chain is Glycerol kinase (497 aa).

Threonine 12 lines the ADP pocket. ATP is bound by residues threonine 12, threonine 13, and serine 14. Threonine 12 contributes to the sn-glycerol 3-phosphate binding site. ADP is bound at residue arginine 16. 4 residues coordinate sn-glycerol 3-phosphate: arginine 82, glutamate 83, tyrosine 133, and aspartate 243. 5 residues coordinate glycerol: arginine 82, glutamate 83, tyrosine 133, aspartate 243, and glutamine 244. Residues threonine 265 and glycine 308 each coordinate ADP. 4 residues coordinate ATP: threonine 265, glycine 308, glutamine 312, and glycine 409. Glycine 409 serves as a coordination point for ADP.

The protein belongs to the FGGY kinase family.

The catalysed reaction is glycerol + ATP = sn-glycerol 3-phosphate + ADP + H(+). It participates in polyol metabolism; glycerol degradation via glycerol kinase pathway; sn-glycerol 3-phosphate from glycerol: step 1/1. With respect to regulation, inhibited by fructose 1,6-bisphosphate (FBP). Its function is as follows. Key enzyme in the regulation of glycerol uptake and metabolism. Catalyzes the phosphorylation of glycerol to yield sn-glycerol 3-phosphate. In Dichelobacter nodosus (strain VCS1703A), this protein is Glycerol kinase.